Here is a 372-residue protein sequence, read N- to C-terminus: MLKLVENVVERVSSEETKVQEVQVPQSSIDEELKKIVEQIKARIHVVGVGGAGCNTVNRMMEVGVTGAKIIAVNTDAQDLLKVKAHQKILIGKEITRGLGAGNDPKIGEEAAKESEREIREALEGADMVFVTCGLGGGTGTGAAPVIAEMARKMGALTVSVVTLPFTMEGIRRAKNAEYGLKRLAKASDTVIVIPNDKLLEVAPKLPIQMAFKVADEILVQAVKGITELITKPGLVNLDFNDVRAVMKDGGVAMIGIGESDSEKRALEAAEQALNSPLLDVDISGAKGALISISGADVKLEEAQQIIEYVTRNVDPKAQVIWGIQLEPELEKTIRVMVIVTGITSRYVTFQEETPAPSEEETTPVKIDIPEL.

GTP contacts are provided by residues 51 to 55, 138 to 140, E169, R173, and D216; these read GAGCN and GTG. The segment at 352–372 is disordered; it reads EETPAPSEEETTPVKIDIPEL.

This sequence belongs to the FtsZ family. As to quaternary structure, homodimer. Polymerizes to form a dynamic ring structure in a strictly GTP-dependent manner. Interacts directly with several other division proteins.

It localises to the cytoplasm. In terms of biological role, essential cell division protein that forms a contractile ring structure (Z ring) at the future cell division site. The regulation of the ring assembly controls the timing and the location of cell division. One of the functions of the FtsZ ring is to recruit other cell division proteins to the septum to produce a new cell wall between the dividing cells. Binds GTP and shows GTPase activity. The sequence is that of Cell division protein FtsZ 1 from Pyrococcus horikoshii (strain ATCC 700860 / DSM 12428 / JCM 9974 / NBRC 100139 / OT-3).